Consider the following 492-residue polypeptide: Histone-lysine N-methyltransferase ASHH1 (492 aa).

The AWS domain occupies 36–87 (EDISICECKFDFGDPDSACGERCLNVITNTECTPGYCPCGVYCKNQKFQKCE). The region spanning 84 to 206 (QKCEYAKTKL…PRTELAYDYN (123 aa)) is the SET domain. Residues 213–229 (AKVRCLCGAVACSGFLG) form the Post-SET domain. The segment at 259-340 (SAEDELTSEP…NSQEDSSPKT (82 aa)) is disordered. Residues 266–275 (SEPSKNGESN) show a composition bias toward polar residues. Positions 277 to 290 (NEEKEKDISTENHL) are enriched in basic and acidic residues. Positions 291 to 306 (ESTALNIQQQSDSTPT) are enriched in polar residues. Residues 317 to 326 (VKTETSEDMK) show a composition bias toward basic and acidic residues. Positions 328-339 (LSQNSQEDSSPK) are enriched in polar residues.

It belongs to the class V-like SAM-binding methyltransferase superfamily. Histone-lysine methyltransferase family. SET2 subfamily.

It localises to the nucleus. Its subcellular location is the chromosome. The protein resides in the centromere. The enzyme catalyses L-lysyl(4)-[histone H3] + 3 S-adenosyl-L-methionine = N(6),N(6),N(6)-trimethyl-L-lysyl(4)-[histone H3] + 3 S-adenosyl-L-homocysteine + 3 H(+). Functionally, histone methyltransferase involved in regulation of flowering time. Required for the expression of the SOC1/AGL20 gene. Required for histone H3 trimethylation on 'Lys-4' (H3K4me3) at the SOC1 locus. Prevents trimethylation on 'Lys-27' (H3K27me3) at the same locus. The protein is Histone-lysine N-methyltransferase ASHH1 (ASHH1) of Arabidopsis thaliana (Mouse-ear cress).